We begin with the raw amino-acid sequence, 56 residues long: MEFDSYIDWYNNLLTMPLNDVILGVKDTIEDKTVYLSLSDSKVIKMDNTSFVMGYY.

The protein belongs to the skunalikevirus head completion protein 2 family.

It is found in the virion. Its function is as follows. Probably functions as a stopper that is part of the head-tail connector and that locks the viral DNA in the capsid. During assembly, functions as a docking platform which the preassembled tail can bind to. Plays a role in morphogenesis of the virion capsid after genome packaging. The chain is Probable head completion protein 2 from Lactococcus lactis (Lactococcus lactis bacteriophage SK1).